We begin with the raw amino-acid sequence, 415 residues long: Adenylosuccinate synthetase (415 aa).

Residues 11–17 and 39–41 each bind GTP; these read GDEGKGK and GHT. Residue D12 is the Proton acceptor of the active site. Mg(2+)-binding residues include D12 and G39. Residues 12–15, 37–40, T124, R138, Q218, T233, and R297 contribute to the IMP site; these read DEGK and NAGH. Residue H40 is the Proton donor of the active site. 293-299 is a substrate binding site; that stretch reads TTTGRAR. Residues R299, 325-327, and 403-405 contribute to the GTP site; these read KLD and STS.

It belongs to the adenylosuccinate synthetase family. As to quaternary structure, homodimer. It depends on Mg(2+) as a cofactor.

It is found in the cytoplasm. The catalysed reaction is IMP + L-aspartate + GTP = N(6)-(1,2-dicarboxyethyl)-AMP + GDP + phosphate + 2 H(+). It functions in the pathway purine metabolism; AMP biosynthesis via de novo pathway; AMP from IMP: step 1/2. Its function is as follows. Plays an important role in the de novo pathway of purine nucleotide biosynthesis. Catalyzes the first committed step in the biosynthesis of AMP from IMP. This Helicobacter hepaticus (strain ATCC 51449 / 3B1) protein is Adenylosuccinate synthetase.